Consider the following 366-residue polypeptide: MCMQEYSTCPTIDHDGLHKICCYSHSQHDCRDPVIDMPPCCYPTLVRKQKMTVNPGSKSHHPKAGLLSYLPAALVPYGELLRVHRALGYYLNTSPYVVGIAYSAATAPTKLPLDLLLDRLLLLTLWSFILRSAGCAWNDLIDVDIDRQISRTQSRPLARGAISLPTATIFTACLFALGCSLFLFLPRQCAFEAGIEVFFALLYPFGKRFTDHPQLILVNIAWAIPMAMHSLGVEPGRQILSSICLCVFIATVIVLIDLVYSRQDTEEDLKVGVKSMAVRYRDCIDTLAYSLFAISTLALLFGGLLGGLRAPFVVFSVGGHIVGFWTFLRASLQTGPAGVESRAKSSCLMASIFWLLGLGIEYAVRV.

The next 8 membrane-spanning stretches (helical) occupy residues 97–117, 121–141, 164–184, 215–235, 239–259, 287–307, 308–328, and 346–366; these read VVGIAYSAATAPTKLPLDLLL, LLLTLWSFILRSAGCAWNDLI, LPTATIFTACLFALGCSLFLF, LILVNIAWAIPMAMHSLGVEP, ILSSICLCVFIATVIVLIDLV, LAYSLFAISTLALLFGGLLGG, LRAPFVVFSVGGHIVGFWTFL, and SCLMASIFWLLGLGIEYAVRV.

It belongs to the UbiA prenyltransferase family. Requires Mg(2+) as cofactor.

The protein localises to the membrane. It carries out the reaction 3,5-dimethylorsellinate + (2E,6E)-farnesyl diphosphate = (3R)-3-farnesyl-6-hydroxy-2,3,5-trimethyl-4-oxocyclohexa-1,5-diene-1-carboxylate + diphosphate + H(+). The protein operates within secondary metabolite biosynthesis; terpenoid biosynthesis. Its function is as follows. Polyprenyl transferase; part of the gene cluster that mediates the biosynthesis of calidodehydroaustin, a fungal meroterpenoid. The first step of the pathway is the synthesis of 3,5-dimethylorsellinic acid by the polyketide synthase ausA. 3,5-dimethylorsellinic acid is then prenylated by the polyprenyl transferase ausN. Further epoxidation by the FAD-dependent monooxygenase ausM and cyclization by the probable terpene cyclase ausL lead to the formation of protoaustinoid A. Protoaustinoid A is then oxidized to spiro-lactone preaustinoid A3 by the combined action of the FAD-binding monooxygenases ausB and ausC, and the dioxygenase ausE. Acid-catalyzed keto-rearrangement and ring contraction of the tetraketide portion of preaustinoid A3 by ausJ lead to the formation of preaustinoid A4. The aldo-keto reductase ausK, with the help of ausH, is involved in the next step by transforming preaustinoid A4 into isoaustinone which is in turn hydroxylated by the P450 monooxygenase ausI to form austinolide. The cytochrome P450 monooxygenase ausG modifies austinolide to austinol. Austinol is further acetylated to austin by the O-acetyltransferase ausP, which spontaneously changes to dehydroaustin. The cytochrome P450 monooxygenase ausR then converts dehydroaustin is into 7-dehydrodehydroaustin. The hydroxylation catalyzed by ausR permits the O-acetyltransferase ausQ to add an additional acetyl group to the molecule, leading to the formation of acetoxydehydroaustin. The short chain dehydrogenase ausT catalyzes the reduction of the double bond present between carbon atoms 1 and 2 to convert 7-dehydrodehydroaustin into 1,2-dihydro-7-hydroxydehydroaustin. AusQ catalyzes not only an acetylation reaction but also the addition of the PKS ausV diketide product to 1,2-dihydro-7-hydroxydehydroaustin, forming precalidodehydroaustin. Finally, the iron/alpha-ketoglutarate-dependent dioxygenase converts precalidodehydroaustin into calidodehydroaustin. The chain is Polyprenyl transferase ausN from Aspergillus calidoustus.